The primary structure comprises 347 residues: Holliday junction branch migration complex subunit RuvB (347 aa).

The segment at 4–185 (TDRLITPAPL…FGIISRLEFY (182 aa)) is large ATPase domain (RuvB-L). ATP contacts are provided by residues Leu-24, Arg-25, Gly-66, Lys-69, Thr-70, Thr-71, 132–134 (EDY), Arg-175, Tyr-185, and Arg-222. Thr-70 is a Mg(2+) binding site. Positions 186-256 (SVEELTQIVM…VADAALLMLD (71 aa)) are small ATPAse domain (RuvB-S). Residues 259–347 (AIGLDVMDRK…LSADLWDEKQ (89 aa)) form a head domain (RuvB-H) region. Arg-295, Arg-314, and Arg-319 together coordinate DNA.

The protein belongs to the RuvB family. In terms of assembly, homohexamer. Forms an RuvA(8)-RuvB(12)-Holliday junction (HJ) complex. HJ DNA is sandwiched between 2 RuvA tetramers; dsDNA enters through RuvA and exits via RuvB. An RuvB hexamer assembles on each DNA strand where it exits the tetramer. Each RuvB hexamer is contacted by two RuvA subunits (via domain III) on 2 adjacent RuvB subunits; this complex drives branch migration. In the full resolvosome a probable DNA-RuvA(4)-RuvB(12)-RuvC(2) complex forms which resolves the HJ.

The protein resides in the cytoplasm. It carries out the reaction ATP + H2O = ADP + phosphate + H(+). The RuvA-RuvB-RuvC complex processes Holliday junction (HJ) DNA during genetic recombination and DNA repair, while the RuvA-RuvB complex plays an important role in the rescue of blocked DNA replication forks via replication fork reversal (RFR). RuvA specifically binds to HJ cruciform DNA, conferring on it an open structure. The RuvB hexamer acts as an ATP-dependent pump, pulling dsDNA into and through the RuvAB complex. RuvB forms 2 homohexamers on either side of HJ DNA bound by 1 or 2 RuvA tetramers; 4 subunits per hexamer contact DNA at a time. Coordinated motions by a converter formed by DNA-disengaged RuvB subunits stimulates ATP hydrolysis and nucleotide exchange. Immobilization of the converter enables RuvB to convert the ATP-contained energy into a lever motion, pulling 2 nucleotides of DNA out of the RuvA tetramer per ATP hydrolyzed, thus driving DNA branch migration. The RuvB motors rotate together with the DNA substrate, which together with the progressing nucleotide cycle form the mechanistic basis for DNA recombination by continuous HJ branch migration. Branch migration allows RuvC to scan DNA until it finds its consensus sequence, where it cleaves and resolves cruciform DNA. This is Holliday junction branch migration complex subunit RuvB from Nitrosospira multiformis (strain ATCC 25196 / NCIMB 11849 / C 71).